The chain runs to 448 residues: Trk system potassium uptake protein TrkA homolog 1 (448 aa).

The RCK N-terminal 1 domain maps to Met-1–Ile-124. NAD(+)-binding positions include Gly-7–Val-11, Asp-29, Thr-70–Gly-71, and Arg-101. One can recognise an RCK C-terminal 1 domain in the interval Ile-144–Ser-225. Positions Arg-230–Val-348 constitute an RCK N-terminal 2 domain. Residue Arg-232–His-262 coordinates NAD(+). In terms of domain architecture, RCK C-terminal 2 spans Gln-368–Lys-448.

Functionally, part of a potassium transport system. The protein is Trk system potassium uptake protein TrkA homolog 1 (trkA1) of Methanosarcina mazei (strain ATCC BAA-159 / DSM 3647 / Goe1 / Go1 / JCM 11833 / OCM 88) (Methanosarcina frisia).